We begin with the raw amino-acid sequence, 297 residues long: Esterase LipU (297 aa).

Residues Ser-140, Glu-239, and His-269 contribute to the active site.

Belongs to the 'GDXG' lipolytic enzyme family.

The protein resides in the secreted. The catalysed reaction is a fatty acid ester + H2O = an aliphatic alcohol + a fatty acid + H(+). It carries out the reaction a butanoate ester + H2O = an aliphatic alcohol + butanoate + H(+). The enzyme catalyses an acetyl ester + H2O = an aliphatic alcohol + acetate + H(+). It catalyses the reaction decanoate ester + H2O = decanoate + an aliphatic alcohol + H(+). The catalysed reaction is an octanoate ester + H2O = an aliphatic alcohol + octanoate + H(+). It carries out the reaction a dodecanoate ester + H2O = an aliphatic alcohol + dodecanoate + H(+). The enzyme catalyses hexadecanoate ester + H2O = an aliphatic alcohol + hexadecanoate + H(+). Its activity is regulated as follows. Inhibited by the ionic detergent SDS and by the serine protease inhibitor PMSF. Inhibited by the FDA approved drugs Diosmin, Acarbose and Ouabain. These drugs remain bound in the active site pocket and could be probable drug candidates to combat TB disease. Functionally, esterase that shows preference for short chain fatty acids. Contributes to the growth of M.tuberculosis during the nutritive stress. Elicits strong humoral response in both extrapulmonary and relapsed cases of tuberculosis patients. This is Esterase LipU from Mycobacterium tuberculosis (strain ATCC 25618 / H37Rv).